The chain runs to 2273 residues: MIKSAYAWQCSVDIPYEPTYYPPGPRGRPGAASGTISLSLKAPALSGVRLHPRNGFFEVVRLEHTCWKAAPMNLTLTTTSITIQPSATMANRAPTLLDHFHDQLQKHSSSVAIEDGTQSADQGAWERVTYAQLDALSDSWSKRLRQAGVGAGCIVPLLSKRSVAMVAATLAILKLRAAYVPIDIDSWGKDRIDTVLKTVNPQIIVSTSPCPKDHYPYPVVALERNDFDETVTSNGTQWTRNDEDSIDRGNDLAYIIFTSGTTGIPKGVKIGQRSISRYVKEGGDLPFNFNTTHGTRVLLICSIAFDVCAGVMFNTLCNGGTLVLADPSTFETAAKTCHVLPLTPSILVTLDPKAGFDTVEKIFLGGESPSPSLIEAWSSPRRRLYNAYGPTETTCTAFMGELLPGSPITIGYPISYSTVTLLDEDGMESVEGEICIAGLGLALGYFHDPERTNSAFVEWNGVRIYKTGDYGRRTKHGLQFCGRRDSVVKNRGFLINLEADVEPALLSYDKVDSASAFMSQGQLIAFVTPTSAKEGLREYLANTVSSFLVPDTIYSLDEFPRTSNGKVDRRSLMRMHELEQGSDTASLERGLGAVESVRRGLSHVLRLPESQILPASSFRHLGGHSLAAVMLVSVLRRMGFGISVAEVLLLDTVENIAAAVVELSDIPHALSAQEDLIERLRHDISTTRPLDEGVTIAPMTDMQTRLLGASVATPGLSFIKTSFTLDHPEKEDLTSTLRAAWVRLHQTHEILRTAFVLTASNGAQIISQEPDFSWKEKFVTESEWESVCRREEHLDVADFPDFDAENRASLSRVVLIIAPRRRTRFVWTVHHSLIDGWSMATLMRDFASCLDGKPIPAPPQFAQVAQAIGQLKAESSDRAVSFWKEYLDGYTPAQRLRVSPPSDVSDYTQAALSRKLTVSVSALEDAARDRFAVTPATLLYAAWGLLLSRYSGTDRAALGAVLSGRSLPIPGVENIIGPLINTLPLAINTQEAQSTYSFVQSVFRRLCDILEFQWSPVALIQEGCGCNPSELFETLFALQYDFPQTPWKSSEVPEPRDIRYEEATQVPLTVLLDNANGQFEVRFIYRRSHFGDATVQRMIGQFGNLLENLIAAQPDTDLSNVTGQMFNNRVYEMSIAKPGQPVSACKVPESLTEAIENSIQAHPDIYAVEGLTGRLTYREFGRMTEHISQRLLQHIQPGSVACMISDGSLLWLLAMVAIIRAGAIYCPVDEKLPRDRKDYMVRNSRAALILYANSSQEPLCNGVPSLNMESIMQEISSSSGSPIATSRNRPSGDTVACLVYTSGSTGLPKAVQLQHKGILNVISQPEGRLYSRPGQRNAQMLSLGFDCCIKEVFSTICFGATLVLKDPENPISHLARVDATMATPSLLATLEPTDYPNLKVITVAGEAVSQVLNDKWAAGRTLINGYGPAECTLISTTAILHPGNRVSIGKPLPGLSCYLLDSNKRPVPMGVSGEIYISGVQVTPGYLHNEQETSKRFLSDSFNPGQVMYRTGDIGRMLEDGNIEYIGREDNQIKLRGFRIDLGEVQSTISKLASTASNVALIVSNGNLVAFMTPETIDVRSLAKSLETQLPQYAVPNRIIALATLPTSANNKVDSSALQRYLRDHGKDGAVVEDLETDTQRVLAVIWADMLGRDLNQTPISPSDRFFELGGHSLLQIKVAQAISKRWNIRPLPLKQVIRHHSLQDLSLAIDELVSDPRTVSTMPFLEMTPVARNGQLPLSYLEKEMLLNHLISGGSPAGNMNFVCKIRGDINAETLADAFQRVTADVEVFRTRYSVIEGTLFRQQAPGSVKVPRVVQTGNLSSFVHGRITKSFDLSTEPPVDVSIIIGTPMQAMLVVVMSHVVGDAATMATYLNRVSRTYDLLRSNSQTTNTSTVPDNLTYIDWAHWASTLQPNPRALTFWSSYLSNPPSPLTFGNPSPAPATYIGLTRSWTLPPSMYRKLSDLAAKASVTMHQLILAAVFFSLQCVDRRDDILVAAPFTHRTEPGTESLPGLFLDRLLLRIQRSPHQSSIFDFLSSVRETSQQALAHVIPFHTLRHSLAHKPSLIDPLFKVMVTYHTAADQRPLLDLSGAEVQPIPWRHTGGSKFPLKFEFTEMATQDLEVDMEYDLGCIREDIALRLEFALSFALQLMVLERETDDIIQLVQMSFCPGEGSPVGLTPSHEGSAELTNGTNKTDSTTGQQELENNLTDVVCECLGLEIQDVDADKSFWDLGAQSMDALKLQHLCEKRGVRVRLRDIFVSRSLLELATCAVII.

The interval 100–446 (FHDQLQKHSS…AGLGLALGYF (347 aa)) is adenylation 1. Residues 588–664 (ERGLGAVESV…NIAAAVVELS (77 aa)) form the Carrier 1 domain. Ser625 carries the post-translational modification O-(pantetheine 4'-phosphoryl)serine. Positions 696-1120 (IAPMTDMQTR…AAQPDTDLSN (425 aa)) are condensation 1. The segment at 1156–1487 (ENSIQAHPDI…SGVQVTPGYL (332 aa)) is adenylation 2. A Carrier 2 domain is found at 1634 to 1714 (DLETDTQRVL…DLSLAIDELV (81 aa)). Position 1673 is an O-(pantetheine 4'-phosphoryl)serine (Ser1673). Residues 1735-2127 (GQLPLSYLEK…QDLEVDMEYD (393 aa)) are condensation 2. The segment at 2174 to 2200 (PVGLTPSHEGSAELTNGTNKTDSTTGQ) is disordered. Polar residues predominate over residues 2186-2200 (ELTNGTNKTDSTTGQ). Positions 2201 to 2273 (QELENNLTDV…LELATCAVII (73 aa)) constitute a Carrier 3 domain. The residue at position 2235 (Ser2235) is an O-(pantetheine 4'-phosphoryl)serine.

Belongs to the NRP synthetase family. Pantetheine 4'-phosphate serves as cofactor.

It functions in the pathway secondary metabolite biosynthesis. Functionally, nonribosomal peptide synthetase; part of the gene cluster that mediates the biosynthesis of hexadehydro-astechrome (HAS), a tryptophan-derived iron(III)-complex that acts as a virulence factor in infected mice. Within the pathway, the NRPS condenses tryptophan and alanine to produce the Trp-Ala dipeptide. The 7-dimethylallyltryptophan synthase hasE then catalyzes the prenylation of the hasD-tethered tryptophan or the resulting tethered Trp-Ala dipeptide at the C-7 position of the indole moiety. HAS biosynthesis continues via tethered intermediates with the succesive actions of the cytochrome P450 monooxygenase hasH, the O-methyltransferase hasC, and the FAD-linked oxidoreductase hasG. The resulting O-methylated diketopiperazine is then released from hasD. Finally, three O-methylated diketopiperazine molecules assemble in a trimeric complex with Fe(III) to produce hexadehydro-astechrome. This chain is Nonribosomal peptide synthetase hasD, found in Aspergillus fumigatus (strain CBS 144.89 / FGSC A1163 / CEA10) (Neosartorya fumigata).